The chain runs to 310 residues: MMTDLSLTRDEDEEEAKPLAEEEGAREVADREHMFDKVVTPSDVGKLNRLVIPKQHAERFFPLDSSSNEKGLLLNFEDLTGKSWRFRYSYWNSSQSYVMTKGWSRFVKDKKLDAGDIVSFQRCVGDSGRDSRLFIDWRRRPKVPDHPHFAAGAMFPRFYSFPSTNYSLYNHQQQRHHHSGGGYNYHQIPREFGYGYFVRSVDQRNNPAAAVADPLVIESVPVMMHGRANQELVGTAGKRLRLFGVDMECGESGMTNSTEEESSSSGGSLPRGGGGGASSSSFFQLRLGSSSEDDHFTKKGKSSLSFDLDQ.

Residues methionine 1 to arginine 26 are disordered. Residues alanine 16–arginine 26 show a composition bias toward basic and acidic residues. The TF-B3 DNA-binding region spans phenylalanine 35–proline 141. Low complexity predominate over residues glutamate 251–serine 268. The disordered stretch occupies residues glutamate 251–glutamine 310.

Interacts with BRX. Interacts with BZIP30.

The protein localises to the nucleus. Its function is as follows. Regulates lateral organ growth. Functionally redundant with NGA2, NGA3 and NGA4. In Arabidopsis thaliana (Mouse-ear cress), this protein is B3 domain-containing transcription factor NGA1 (NGA1).